The primary structure comprises 979 residues: UPF0182 protein Rv0064 (979 aa).

7 consecutive transmembrane segments (helical) span residues 19–41 (LVTA…DIYV), 63–85 (LAIV…LLAY), 114–136 (LFGW…FDWV), 174–196 (WLFV…FGGL), 208–230 (AARV…AYWL), 261–280 (LVLV…AIFL), and 285–307 (IPAM…WPLL). Positions 898-948 (GTGRVATARGGDAASAPPPGAGGPAPPQAVPPPRTTQPPAAPPRGPDVPPA) are disordered. Positions 913 to 946 (APPPGAGGPAPPQAVPPPRTTQPPAAPPRGPDVP) are enriched in pro residues.

Belongs to the UPF0182 family.

Its subcellular location is the cell membrane. The protein is UPF0182 protein Rv0064 of Mycobacterium tuberculosis (strain ATCC 25618 / H37Rv).